The primary structure comprises 164 residues: MTEPSAATTSLVSDFNIKKILELLPHRYPMLLVDRVLEMEPRKRIKAIKNVTFNEPFFNGHFPGHPVMPGVLMLEALAQTAALLTFGESNHKRQENQLYLFVSIDGARFKRQVTPGDQLVLNAELLRSKSGMWKFKVFATVDDEVAAEAEIMCAVREDKSKGDA.

H61 is a catalytic residue.

Belongs to the thioester dehydratase family. FabZ subfamily.

The protein resides in the cytoplasm. The enzyme catalyses a (3R)-hydroxyacyl-[ACP] = a (2E)-enoyl-[ACP] + H2O. Involved in unsaturated fatty acids biosynthesis. Catalyzes the dehydration of short chain beta-hydroxyacyl-ACPs and long chain saturated and unsaturated beta-hydroxyacyl-ACPs. This Ralstonia nicotianae (strain ATCC BAA-1114 / GMI1000) (Ralstonia solanacearum) protein is 3-hydroxyacyl-[acyl-carrier-protein] dehydratase FabZ.